We begin with the raw amino-acid sequence, 293 residues long: Probable xyloglucan endotransglucosylase/hydrolase protein 7 (293 aa).

Residues 1 to 29 form the signal peptide; it reads MVVSLFSSRNVFYTLSLCLFAALYQPVMS. Residues 30 to 223 enclose the GH16 domain; sequence RPAKFEDDFR…WSRAPFYAYY (194 aa). Glu109 functions as the Nucleophile in the catalytic mechanism. Glu113 (proton donor) is an active-site residue. Glu113 contributes to the xyloglucan binding site. An N-linked (GlcNAc...) asparagine glycan is attached at Asn117. Residues 126–128, 136–138, 202–203, and Gly207 contribute to the xyloglucan site; these read QTN, DRE, and DW. N-linked (GlcNAc...) asparagine glycosylation is present at Asn213. Intrachain disulfides connect Cys231-Cys239 and Cys276-Cys289. Arg281 lines the xyloglucan pocket.

The protein belongs to the glycosyl hydrolase 16 family. XTH group 1 subfamily. Contains at least one intrachain disulfide bond essential for its enzymatic activity.

It is found in the secreted. The protein localises to the cell wall. The protein resides in the extracellular space. It localises to the apoplast. The enzyme catalyses breaks a beta-(1-&gt;4) bond in the backbone of a xyloglucan and transfers the xyloglucanyl segment on to O-4 of the non-reducing terminal glucose residue of an acceptor, which can be a xyloglucan or an oligosaccharide of xyloglucan.. Its function is as follows. Catalyzes xyloglucan endohydrolysis (XEH) and/or endotransglycosylation (XET). Cleaves and religates xyloglucan polymers, an essential constituent of the primary cell wall, and thereby participates in cell wall construction of growing tissues. In Arabidopsis thaliana (Mouse-ear cress), this protein is Probable xyloglucan endotransglucosylase/hydrolase protein 7 (XTH7).